We begin with the raw amino-acid sequence, 777 residues long: Shutoff protein (777 aa).

2 disordered regions span residues 1-55 (MEED…SVPV) and 261-283 (PLDS…DDDL). Residues 9-20 (QPDSETLTSPTS) are compositionally biased toward polar residues. The segment at 250-314 (VMDHLLIKRV…VILVTVELEC (65 aa)) is binding to host EIF4G. In terms of domain architecture, RRM spans 317–435 (RFFANPQTLR…ELWTAFSERT (119 aa)). Residues Y334 and Y649 each carry the phosphotyrosine; by host modification. The interval 652-777 (PQTGEELNTP…AAARLVESQP (126 aa)) is disordered. The segment covering 656–665 (EELNTPSPSA) has biased composition (polar residues). Residues 728 to 738 (GAGGQTPQGRG) show a composition bias toward gly residues. Positions 753 to 763 (TRSEPASDGES) are enriched in basic and acidic residues.

The protein belongs to the adenoviridae shutoff protein family. Monomer. Interacts with hexon protein; this interaction allows chaperoning and trimerization of hexon proteins. Interacts (via N-terminus) with host initiation factor EIF4G (via C-terminus). Interacts (via RRM domain) with viral mRNAs that contain the tripartite leader; this interaction allows ribosome shunting and expression of viral late mRNAs. Might be cleaved by the viral protease. Post-translationally, phosphorylated. Tyrosine phosphorylation enhances preferential binding to tripartite leader mRNAs and allows ribosome shunting. In terms of processing, methylated. Asymmetric dimethylation by host PRMT1 of the Arg/Gly-rich region may regulate shutoff protein binding to hexon and promote the capsid assembly in the nucleus.

Its subcellular location is the host cytoplasm. Functionally, protein that inhibits host translation while promoting late viral translation by ribosome shunting. Blocks host cap-dependent translation by binding to eIF4G, displacing MKNK1 from cap initiation complexes and preventing EIF4E phosphorylation. Binds to the tripartite leader sequence of viral late mRNAs and recruits host eIF4G, PABPC1/poly-A binding protein and 40S ribosomes subunits on viral mRNAs, allowing ribosome shunting and efficient translation of late viral mRNAs even though conventional translation via ribosome scanning from the cap has been shut off in the host cell. During assembly, acts as a chaperone protein that helps hexon proteins assembly into trimers. The chain is Shutoff protein from Homo sapiens (Human).